The following is a 406-amino-acid chain: 5-hydroxytryptamine receptor 4 (406 aa).

The Extracellular segment spans residues 1 to 19; that stretch reads MDRLDANVSSNEGFGSVEK. Asn7 carries an N-linked (GlcNAc...) asparagine glycan. The chain crosses the membrane as a helical span at residues 20–44; sequence VVLLTFFAMVILMAILGNLLVMVAV. The Cytoplasmic portion of the chain corresponds to 45–54; the sequence is CRDRQLRKIK. The helical transmembrane segment at 55 to 78 threads the bilayer; sequence TNYFIVSLAFADLLVSVLVNAFGA. Topologically, residues 79 to 92 are extracellular; that stretch reads IELVQDIWFYGEMF. Residues 93 to 117 form a helical membrane-spanning segment; it reads CLVRTSLDVLLTTASIFHLCCISLD. Cys93 and Cys184 form a disulfide bridge. Asp100 serves as a coordination point for serotonin. The Cytoplasmic segment spans residues 118 to 133; that stretch reads RYYAICCQPLVYRNKM. The chain crosses the membrane as a helical span at residues 134–157; that stretch reads TPLRIALMLGGCWVIPMFISFLPI. Over 158 to 188 the chain is Extracellular; sequence MQGWNNIGIVDVIEKRKFNHNSNSTFCVFMV. A helical membrane pass occupies residues 189–212; that stretch reads NKPYAITCSVVAFYIPFLLMVLAY. At 213–257 the chain is on the cytoplasmic side; that stretch reads YRIYVTAKEHAQQIQMLQRAGATSESRPQTADQHSTHRMRTETKA. A helical membrane pass occupies residues 258-283; the sequence is AKTLCVIMGCFCFCWAPFFVTNIVDP. Asn279 is a binding site for serotonin. The Extracellular portion of the chain corresponds to 284-290; it reads FIDYTVP. The chain crosses the membrane as a helical span at residues 291–314; sequence EKVWTAFLWLGYINSGLNPFLYAF. Over 315–406 the chain is Cytoplasmic; the sequence is LNKSFRRAFL…DSCSLKRSQS (92 aa).

The protein belongs to the G-protein coupled receptor 1 family. In terms of assembly, interacts (via C-terminus 330-346 AA) with GRK5; this interaction is promoted by 5-HT (serotonin). As to expression, in brain, isoform 5-HT4S is restricted to the striatum. In peripheral tissues, differential expression is also observed in the atrium of the heart where only isoform 5-HT4S is detectable. In brain, isoform 5-HT4L is expressed throughout the brain, except in the cerebellum.

Its subcellular location is the cell membrane. The protein resides in the endosome membrane. G-protein coupled receptor for 5-hydroxytryptamine (serotonin), a biogenic hormone that functions as a neurotransmitter, a hormone and a mitogen. Ligand binding causes a conformation change that triggers signaling via guanine nucleotide-binding proteins (G proteins) and modulates the activity of downstream effectors. HTR4 is coupled to G(s) G alpha proteins and mediates activation of adenylate cyclase activity. This is 5-hydroxytryptamine receptor 4 (Htr4) from Rattus norvegicus (Rat).